Here is a 108-residue protein sequence, read N- to C-terminus: Flagellar hook-basal body complex protein FliE (108 aa).

The protein belongs to the FliE family.

It localises to the bacterial flagellum basal body. This is Flagellar hook-basal body complex protein FliE from Pseudomonas fluorescens (strain ATCC BAA-477 / NRRL B-23932 / Pf-5).